The sequence spans 269 residues: Ribonuclease HII (269 aa).

The RNase H type-2 domain maps to 83 to 269; that stretch reads YLIAGVDEVG…HRMSFLTNIL (187 aa). Residues Asp-89, Glu-90, and Asp-185 each coordinate a divalent metal cation.

This sequence belongs to the RNase HII family. Requires Mn(2+) as cofactor. It depends on Mg(2+) as a cofactor.

It is found in the cytoplasm. The catalysed reaction is Endonucleolytic cleavage to 5'-phosphomonoester.. Functionally, endonuclease that specifically degrades the RNA of RNA-DNA hybrids. This Clostridium botulinum (strain Loch Maree / Type A3) protein is Ribonuclease HII.